Reading from the N-terminus, the 310-residue chain is Ribose-phosphate pyrophosphokinase (310 aa).

Residues 34–36 (DGE) and 93–94 (RQ) each bind ATP. Mg(2+)-binding residues include His127 and Asp167. Residue Lys190 is part of the active site. D-ribose 5-phosphate-binding positions include Arg192, Asp216, and 220–224 (DSGGT).

The protein belongs to the ribose-phosphate pyrophosphokinase family. Class I subfamily. Homohexamer. It depends on Mg(2+) as a cofactor.

It is found in the cytoplasm. It carries out the reaction D-ribose 5-phosphate + ATP = 5-phospho-alpha-D-ribose 1-diphosphate + AMP + H(+). Its pathway is metabolic intermediate biosynthesis; 5-phospho-alpha-D-ribose 1-diphosphate biosynthesis; 5-phospho-alpha-D-ribose 1-diphosphate from D-ribose 5-phosphate (route I): step 1/1. Its function is as follows. Involved in the biosynthesis of the central metabolite phospho-alpha-D-ribosyl-1-pyrophosphate (PRPP) via the transfer of pyrophosphoryl group from ATP to 1-hydroxyl of ribose-5-phosphate (Rib-5-P). The polypeptide is Ribose-phosphate pyrophosphokinase (Maricaulis maris (strain MCS10) (Caulobacter maris)).